Here is a 241-residue protein sequence, read N- to C-terminus: MRKIIIAGNWKMYKTQAESLDFLKALLPKIADDHEEREVVLCTPFTDLGLMSKSLHGTRVRLGAQNIHWADEGAFTGEISGSMLTEMGVRYVIVGHSERRQYFGETDETVNQRLKAAQRHGLTPILCVGESKAQRDAGETEAVIFAQLEQDLVDIDQNNLVVAYEPIWAIGTGDTCDATEANRVIGLIREKLTNKNVTIQYGGSVKPNNVDEIMAQPEIDGALVGGASLEAESFARLVNYV.

9–11 (NWK) serves as a coordination point for substrate. His-96 functions as the Electrophile in the catalytic mechanism. Glu-165 (proton acceptor) is an active-site residue. Residues Gly-171, Ser-204, and 225–226 (GG) each bind substrate.

The protein belongs to the triosephosphate isomerase family. As to quaternary structure, homodimer.

Its subcellular location is the cytoplasm. The enzyme catalyses D-glyceraldehyde 3-phosphate = dihydroxyacetone phosphate. It participates in carbohydrate biosynthesis; gluconeogenesis. Its pathway is carbohydrate degradation; glycolysis; D-glyceraldehyde 3-phosphate from glycerone phosphate: step 1/1. Involved in the gluconeogenesis. Catalyzes stereospecifically the conversion of dihydroxyacetone phosphate (DHAP) to D-glyceraldehyde-3-phosphate (G3P). In Picosynechococcus sp. (strain ATCC 27264 / PCC 7002 / PR-6) (Agmenellum quadruplicatum), this protein is Triosephosphate isomerase.